The following is a 409-amino-acid chain: Histidinol dehydrogenase homolog (409 aa).

The protein belongs to the histidinol dehydrogenase family.

The protein is Histidinol dehydrogenase homolog of Synechocystis sp. (strain ATCC 27184 / PCC 6803 / Kazusa).